The chain runs to 81 residues: Putative phytosulfokines 6 (81 aa).

The first 20 residues, 1–20 (MKQSLCLAVLFLILSTSSSA), serve as a signal peptide directing secretion. The propeptide occupies 21–72 (IRRGKEDQEINPLVSATSVEEDSVNKLMGMEYCGEGDEECLRRRMMTESHLD). Sulfotyrosine occurs at positions 73 and 75. Residues 78-81 (HHKH) constitute a propeptide that is removed on maturation.

The protein belongs to the phytosulfokine family. Sulfation is important for activity and for the binding to a putative membrane receptor. Post-translationally, PSK-beta is an enzymatic derivative of PSK-alpha. Expressed in roots, leaves, stems, flowers and siliques. Most abundant in vascular bundles and in root tips.

It localises to the secreted. Promotes plant cell differentiation, organogenesis and somatic embryogenesis as well as cell proliferation. The sequence is that of Putative phytosulfokines 6 (PSK6) from Arabidopsis thaliana (Mouse-ear cress).